Consider the following 300-residue polypeptide: Cation-efflux pump FieF (300 aa).

A helical transmembrane segment spans residues 24-44 (LLIKIFAWWYTGSVSILAALV). Zn(2+) contacts are provided by Asp45 and Asp49. 2 helical membrane passes run 82 to 102 (AALA…LTGI) and 114 to 134 (AGVG…LVTF). Zn(2+) contacts are provided by His153 and Asp157. 2 consecutive transmembrane segments (helical) span residues 156–176 (SDVM…YGWH) and 178–198 (ADAL…LRMG).

The protein belongs to the cation diffusion facilitator (CDF) transporter (TC 2.A.4) family. FieF subfamily. As to quaternary structure, homodimer.

The protein resides in the cell inner membrane. The catalysed reaction is Zn(2+)(in) + H(+)(out) = Zn(2+)(out) + H(+)(in). It catalyses the reaction Cd(2+)(in) + H(+)(out) = Cd(2+)(out) + H(+)(in). It carries out the reaction Fe(2+)(in) + H(+)(out) = Fe(2+)(out) + H(+)(in). Divalent metal cation transporter which exports Zn(2+), Cd(2+) and possibly Fe(2+). May be involved in zinc and iron detoxification by efflux. The sequence is that of Cation-efflux pump FieF from Klebsiella pneumoniae (strain 342).